We begin with the raw amino-acid sequence, 194 residues long: Acireductone dioxygenase 1 (194 aa).

Residues M1 to P21 form a disordered region. H87, H89, E93, and H132 together coordinate Fe(2+). Ni(2+) contacts are provided by H87, H89, E93, and H132.

This sequence belongs to the acireductone dioxygenase (ARD) family. Fe(2+) is required as a cofactor. Requires Ni(2+) as cofactor.

The protein resides in the cytoplasm. It is found in the nucleus. The enzyme catalyses 1,2-dihydroxy-5-(methylsulfanyl)pent-1-en-3-one + O2 = 4-methylsulfanyl-2-oxobutanoate + formate + 2 H(+). It carries out the reaction 1,2-dihydroxy-5-(methylsulfanyl)pent-1-en-3-one + O2 = 3-(methylsulfanyl)propanoate + CO + formate + 2 H(+). It functions in the pathway amino-acid biosynthesis; L-methionine biosynthesis via salvage pathway; L-methionine from S-methyl-5-thio-alpha-D-ribose 1-phosphate: step 5/6. In terms of biological role, catalyzes 2 different reactions between oxygen and the acireductone 1,2-dihydroxy-3-keto-5-methylthiopentene (DHK-MTPene) depending upon the metal bound in the active site. Fe-containing acireductone dioxygenase (Fe-ARD) produces formate and 2-keto-4-methylthiobutyrate (KMTB), the alpha-ketoacid precursor of methionine in the methionine recycle pathway. Ni-containing acireductone dioxygenase (Ni-ARD) produces methylthiopropionate, carbon monoxide and formate, and does not lie on the methionine recycle pathway. This Physcomitrium patens (Spreading-leaved earth moss) protein is Acireductone dioxygenase 1.